The chain runs to 620 residues: Glutathione-regulated potassium-efflux system protein KefC (620 aa).

Residues 1 to 3 (MDS) lie on the Periplasmic side of the membrane. The helical transmembrane segment at 4–24 (HTLVQALIYLGSAALIVPIAV) threads the bilayer. Position 25 (Arg-25) is a topological domain, cytoplasmic. The helical transmembrane segment at 26 to 46 (LGLGSVLGYLIAGCIIGPWGL) threads the bilayer. Residues 47–53 (RLVTDAE) lie on the Periplasmic side of the membrane. A helical transmembrane segment spans residues 54-74 (SILHFAEIGVVLMLFIIGLEL). Residues 75-89 (DPQRLWKLRAAVFGG) lie on the Cytoplasmic side of the membrane. A helical transmembrane segment spans residues 90-110 (GALQMVICGGLLGLFCMLLGL). Residues 111-113 (RWQ) lie on the Periplasmic side of the membrane. The helical transmembrane segment at 114 to 134 (VAELIGMTLALSSTAIAMQAM) threads the bilayer. At 135–148 (NERNLMVTQMGRSA) the chain is on the cytoplasmic side. Residues 149–169 (FAVLLFQDIAAIPLVAMIPLL) traverse the membrane as a helical segment. At 170–177 (AASSASTT) the chain is on the periplasmic side. The helical transmembrane segment at 178–198 (MGAFALSALKVAGALVLVVLL) threads the bilayer. Residues 199–213 (GRYVTRPALRFVARS) are Cytoplasmic-facing. Residues 214-233 (GLREVFSAVALFLVFGFGLL) traverse the membrane as a helical segment. The Periplasmic portion of the chain corresponds to 234-236 (LEE). A helical transmembrane segment spans residues 237-254 (VGLSMAMGAFLAGVLLAS). Residues 255–269 (SEYRHALESDIEPFK) lie on the Cytoplasmic side of the membrane. A helical membrane pass occupies residues 270-290 (GLLLGLFFIGVGMSIDFGTLI). The Periplasmic portion of the chain corresponds to 291–293 (ENP). A helical membrane pass occupies residues 294-314 (LRIVILLLGFLIIKIAMLWLI). Topologically, residues 315–326 (ARPLQVPNKQRR) are cytoplasmic. Residues 327-347 (WFAVLLGQGSEFAFVVFGAAQ) traverse the membrane as a helical segment. At 348–358 (MANVLEPEWAK) the chain is on the periplasmic side. A helical transmembrane segment spans residues 359-379 (SLTLAVALSMAATPILLVILN). Topologically, residues 380-620 (RLEQSSTEEA…ADEPETKPSS (241 aa)) are cytoplasmic. The region spanning 399–518 (QPRVIIAGFG…AGVEKPERET (120 aa)) is the RCK N-terminal domain. The interval 597–620 (GWQGTEEGKHTGNMADEPETKPSS) is disordered.

The protein belongs to the monovalent cation:proton antiporter 2 (CPA2) transporter (TC 2.A.37) family. KefC subfamily. Homodimer. Interacts with the regulatory subunit KefF.

Its subcellular location is the cell inner membrane. In terms of biological role, pore-forming subunit of a potassium efflux system that confers protection against electrophiles. Catalyzes K(+)/H(+) antiport. The sequence is that of Glutathione-regulated potassium-efflux system protein KefC from Escherichia coli O157:H7.